Consider the following 277-residue polypeptide: Ribosomal RNA small subunit methyltransferase A (277 aa).

Residues N27, L29, G54, E75, D95, and N118 each coordinate S-adenosyl-L-methionine.

Belongs to the class I-like SAM-binding methyltransferase superfamily. rRNA adenine N(6)-methyltransferase family. RsmA subfamily.

It localises to the cytoplasm. The enzyme catalyses adenosine(1518)/adenosine(1519) in 16S rRNA + 4 S-adenosyl-L-methionine = N(6)-dimethyladenosine(1518)/N(6)-dimethyladenosine(1519) in 16S rRNA + 4 S-adenosyl-L-homocysteine + 4 H(+). In terms of biological role, specifically dimethylates two adjacent adenosines (A1518 and A1519) in the loop of a conserved hairpin near the 3'-end of 16S rRNA in the 30S particle. May play a critical role in biogenesis of 30S subunits. The chain is Ribosomal RNA small subunit methyltransferase A from Chlamydia trachomatis serovar L2 (strain ATCC VR-902B / DSM 19102 / 434/Bu).